The sequence spans 358 residues: 3-isopropylmalate dehydrogenase (358 aa).

4 residues coordinate substrate: Arg-92, Arg-102, Arg-130, and Asp-224. Mg(2+) is bound by residues Asp-224, Asp-248, and Asp-252. 282-294 contributes to the NAD(+) binding site; sequence GSAPDIAGQGIAN.

Belongs to the isocitrate and isopropylmalate dehydrogenases family. LeuB type 1 subfamily. In terms of assembly, homodimer. The cofactor is Mg(2+). Mn(2+) serves as cofactor.

The protein localises to the cytoplasm. The catalysed reaction is (2R,3S)-3-isopropylmalate + NAD(+) = 4-methyl-2-oxopentanoate + CO2 + NADH. Its pathway is amino-acid biosynthesis; L-leucine biosynthesis; L-leucine from 3-methyl-2-oxobutanoate: step 3/4. Its function is as follows. Catalyzes the oxidation of 3-carboxy-2-hydroxy-4-methylpentanoate (3-isopropylmalate) to 3-carboxy-4-methyl-2-oxopentanoate. The product decarboxylates to 4-methyl-2 oxopentanoate. In Bordetella parapertussis (strain 12822 / ATCC BAA-587 / NCTC 13253), this protein is 3-isopropylmalate dehydrogenase.